Consider the following 164-residue polypeptide: Phosphopantetheine adenylyltransferase (164 aa).

Residue S9 participates in substrate binding. Residues 9 to 10 (SF) and H17 each bind ATP. Positions 41, 78, and 92 each coordinate substrate. ATP contacts are provided by residues 93-95 (GLR), E103, and 128-134 (GRVITST).

It belongs to the bacterial CoaD family. As to quaternary structure, homohexamer. It depends on Mg(2+) as a cofactor.

The protein resides in the cytoplasm. It catalyses the reaction (R)-4'-phosphopantetheine + ATP + H(+) = 3'-dephospho-CoA + diphosphate. It participates in cofactor biosynthesis; coenzyme A biosynthesis; CoA from (R)-pantothenate: step 4/5. In terms of biological role, reversibly transfers an adenylyl group from ATP to 4'-phosphopantetheine, yielding dephospho-CoA (dPCoA) and pyrophosphate. The polypeptide is Phosphopantetheine adenylyltransferase (Bartonella bacilliformis (strain ATCC 35685 / KC583 / Herrer 020/F12,63)).